The sequence spans 460 residues: Orexin receptor type 2 (460 aa).

Residues 1-54 (MSSTKLEDSLPRRNWSSASELNETQEPFLNPTDYDDEEFLRYLWREYLHPKEYE) are Extracellular-facing. 2 N-linked (GlcNAc...) asparagine glycosylation sites follow: Asn14 and Asn22. The interval 33-49 (DYDDEEFLRYLWREYLH) is required for response to orexin-A. Residues 55 to 75 (WVLIAGYIIVFVVALIGNVLV) form a helical membrane-spanning segment. The Cytoplasmic segment spans residues 76–88 (CVAVWKNHHMRTV). The chain crosses the membrane as a helical span at residues 89 to 110 (TNYFIVNLSLADVLVTITCLPA). Residues 111 to 127 (TLVVDITETWFFGQSLC) lie on the Extracellular side of the membrane. Cys127 and Cys210 form a disulfide bridge. Residues 128-150 (KVIPYLQTVSVSVSVLTLSCIAL) form a helical membrane-spanning segment. At 151 to 170 (DRWYAICHPLMFKSTAKRAR) the chain is on the cytoplasmic side. The chain crosses the membrane as a helical span at residues 171–191 (NSIVVIWIVSCIIMIPQAIVM). The Extracellular segment spans residues 192–222 (ERSSMLPGLANKTTLFTVCDERWGGEVYPKM). The N-linked (GlcNAc...) asparagine glycan is linked to Asn202. A helical membrane pass occupies residues 223 to 243 (YHICFFLVTYMAPLCLMVLAY). The Cytoplasmic segment spans residues 244-304 (LQIFRKLWCR…QIRARRKTAR (61 aa)). Residues 305-326 (MLMVVLLVFAICYLPISILNVL) traverse the membrane as a helical segment. Residues 327 to 342 (KRVFGMFTHTEDRETV) lie on the Extracellular side of the membrane. Residues 343–366 (YAWFTFSHWLVYANSAANPIIYNF) traverse the membrane as a helical segment. Residues 367 to 460 (LSGKFREEFK…SSLLSTWLEV (94 aa)) are Cytoplasmic-facing.

It belongs to the G-protein coupled receptor 1 family. In terms of tissue distribution, expressed in the brain in the cerebral cortex, septal nuclei, hippocampus, medial thalamic groups, dorsal and median raphe nuclei, and many hypothalamic nuclei including the tuberomammillary nucleus, dorsomedial hypothalamus, paraventricular hypothalamic nucleus, and ventral premammillary nucleus. Not detected in the spleen, lung, liver, skeletal muscle, kidney and testis. Orexin receptor mRNA expression has also been reported in the adrenal gland, enteric nervous system, and pancreas.

The protein localises to the cell membrane. In terms of biological role, nonselective, high-affinity receptor for both orexin-A and orexin-B neuropeptides. Triggers an increase in cytoplasmic Ca(2+) levels in response to orexin-A binding. The sequence is that of Orexin receptor type 2 (Hcrtr2) from Rattus norvegicus (Rat).